Consider the following 131-residue polypeptide: Con-Ins Q1b (131 aa).

The N-terminal stretch at 1-24 (MTTSSYFLLVALGLLLYLCQSSFG) is a signal peptide. 4 disulfide bridges follow: cysteine 29/cysteine 107, cysteine 41/cysteine 110, cysteine 53/cysteine 123, and cysteine 109/cysteine 114. A propeptide spans 59 to 92 (LQGGTDDARKKRGRASLLRKRRGFLSMLKARAKR) (c peptide). 4-carboxyglutamate; partial is present on glutamate 118. At serine 130 the chain carries Serine amide.

The protein belongs to the insulin family. In terms of assembly, heterodimer of A and B chains; disulfide-linked. As to expression, expressed by the venom gland.

The protein localises to the secreted. This venom insulin facilitates prey capture by rapidly inducing hypoglycemic shock. Intraperitoneal injection of this peptide into zebrafish lowers blood glucose with the same potency than human insulin. In vivo, when applied to water, this peptide reduces overall locomotor activity of zebrafish larvae, observed as a significant decrease in the percentage of time spent swimming and movement frequency. This chain is Con-Ins Q1b, found in Conus quercinus (Oak cone).